The sequence spans 406 residues: Bifunctional enzyme IspD/IspF (406 aa).

The segment at 1–247 (MSLIRVNGEA…AFFFNPAKDT (247 aa)) is 2-C-methyl-D-erythritol 4-phosphate cytidylyltransferase. The interval 248–406 (FIGMGFDTHA…HVSMRYKQKL (159 aa)) is 2-C-methyl-D-erythritol 2,4-cyclodiphosphate synthase. Aspartate 254 and histidine 256 together coordinate a divalent metal cation. 4-CDP-2-C-methyl-D-erythritol 2-phosphate contacts are provided by residues 254–256 (DTH) and 280–281 (HS). Residue histidine 288 coordinates a divalent metal cation. 4-CDP-2-C-methyl-D-erythritol 2-phosphate contacts are provided by residues 302-304 (DIG), 307-311 (FPDND), 378-381 (TTME), phenylalanine 385, and lysine 388.

In the N-terminal section; belongs to the IspD/TarI cytidylyltransferase family. IspD subfamily. This sequence in the C-terminal section; belongs to the IspF family. The cofactor is a divalent metal cation.

It carries out the reaction 2-C-methyl-D-erythritol 4-phosphate + CTP + H(+) = 4-CDP-2-C-methyl-D-erythritol + diphosphate. The enzyme catalyses 4-CDP-2-C-methyl-D-erythritol 2-phosphate = 2-C-methyl-D-erythritol 2,4-cyclic diphosphate + CMP. The protein operates within isoprenoid biosynthesis; isopentenyl diphosphate biosynthesis via DXP pathway; isopentenyl diphosphate from 1-deoxy-D-xylulose 5-phosphate: step 2/6. It participates in isoprenoid biosynthesis; isopentenyl diphosphate biosynthesis via DXP pathway; isopentenyl diphosphate from 1-deoxy-D-xylulose 5-phosphate: step 4/6. Its function is as follows. Bifunctional enzyme that catalyzes the formation of 4-diphosphocytidyl-2-C-methyl-D-erythritol from CTP and 2-C-methyl-D-erythritol 4-phosphate (MEP) (IspD), and catalyzes the conversion of 4-diphosphocytidyl-2-C-methyl-D-erythritol 2-phosphate (CDP-ME2P) to 2-C-methyl-D-erythritol 2,4-cyclodiphosphate (ME-CPP) with a corresponding release of cytidine 5-monophosphate (CMP) (IspF). This Helicobacter pylori (strain HPAG1) protein is Bifunctional enzyme IspD/IspF.